A 147-amino-acid polypeptide reads, in one-letter code: Nudix hydrolase 1 (147 aa).

Ser2 carries the N-acetylserine modification. In terms of domain architecture, Nudix hydrolase spans 7 to 140 (IPRVAVVVFI…EKLFGSGFNP (134 aa)). Residues 41–62 (GHLEFGESFEECAAREVMEETG) carry the Nudix box motif. Positions 56 and 60 each coordinate Mg(2+).

The protein belongs to the Nudix hydrolase family. Homodimer. Mg(2+) serves as cofactor. Requires Mn(2+) as cofactor. As to expression, expressed in roots, stems and leaves.

The protein localises to the cytoplasm. The enzyme catalyses 7,8-dihydroneopterin 3'-triphosphate + H2O = 7,8-dihydroneopterin 3'-phosphate + diphosphate + H(+). The catalysed reaction is NAD(+) + H2O = beta-nicotinamide D-ribonucleotide + AMP + 2 H(+). It carries out the reaction NADH + H2O = reduced beta-nicotinamide D-ribonucleotide + AMP + 2 H(+). It catalyses the reaction 8-oxo-dGTP + H2O = 8-oxo-dGMP + diphosphate + H(+). In terms of biological role, mediates the hydrolysis of some nucleoside diphosphate derivatives. Its substrate specificity is unclear. In vitro, it can use NTP, dNTP, 8-oxo-GTP, 8-oxo-dGTP, dGTP, dATP, dTTP or dihydroneopterin triphosphate (DHNTP) as substrate. Has some NADH pyrophosphatase activity in vitro; however, such activity may not be relevant in vivo due to the high concentration of manganese used during the experiments. Plays an important role in protection against oxidative DNA and RNA damage by removing oxidatively damaged form of guanine. The protein is Nudix hydrolase 1 (NUDT1) of Arabidopsis thaliana (Mouse-ear cress).